The chain runs to 82 residues: ATP synthase subunit c (82 aa).

Transmembrane regions (helical) follow at residues 7–27 and 53–73; these read LVAL…CIGI and FLLA…AMLF.

The protein belongs to the ATPase C chain family. F-type ATPases have 2 components, F(1) - the catalytic core - and F(0) - the membrane proton channel. F(1) has five subunits: alpha(3), beta(3), gamma(1), delta(1), epsilon(1). F(0) has three main subunits: a(1), b(2) and c(10-14). The alpha and beta chains form an alternating ring which encloses part of the gamma chain. F(1) is attached to F(0) by a central stalk formed by the gamma and epsilon chains, while a peripheral stalk is formed by the delta and b chains.

It is found in the cell inner membrane. F(1)F(0) ATP synthase produces ATP from ADP in the presence of a proton or sodium gradient. F-type ATPases consist of two structural domains, F(1) containing the extramembraneous catalytic core and F(0) containing the membrane proton channel, linked together by a central stalk and a peripheral stalk. During catalysis, ATP synthesis in the catalytic domain of F(1) is coupled via a rotary mechanism of the central stalk subunits to proton translocation. Functionally, key component of the F(0) channel; it plays a direct role in translocation across the membrane. A homomeric c-ring of between 10-14 subunits forms the central stalk rotor element with the F(1) delta and epsilon subunits. The sequence is that of ATP synthase subunit c from Leptothrix cholodnii (strain ATCC 51168 / LMG 8142 / SP-6) (Leptothrix discophora (strain SP-6)).